The following is a 300-amino-acid chain: NAD kinase (300 aa).

The active-site Proton acceptor is the Asp75. Residues 75–76 (DG), 149–150 (ND), Arg177, Asp179, 190–195 (TAYALS), Ala214, and Gln248 contribute to the NAD(+) site.

The protein belongs to the NAD kinase family. The cofactor is a divalent metal cation.

It is found in the cytoplasm. It carries out the reaction NAD(+) + ATP = ADP + NADP(+) + H(+). Involved in the regulation of the intracellular balance of NAD and NADP, and is a key enzyme in the biosynthesis of NADP. Catalyzes specifically the phosphorylation on 2'-hydroxyl of the adenosine moiety of NAD to yield NADP. This Burkholderia orbicola (strain MC0-3) protein is NAD kinase.